Consider the following 437-residue polypeptide: 5-hydroxytryptamine receptor 3B (437 aa).

An N-terminal signal peptide occupies residues 1-21 (MILLWSCLLVAVVGILGTATP). At 22 to 238 (QPGNSSLHRL…VVIRRCPLAY (217 aa)) the chain is on the extracellular side. N-linked (GlcNAc...) asparagine glycosylation is found at Asn-25, Asn-92, and Asn-134. An intrachain disulfide couples Cys-151 to Cys-165. A helical transmembrane segment spans residues 239–259 (VVSLLIPSIFLMLVDLGSFYL). At 260-264 (PPNCR) the chain is on the cytoplasmic side. A helical membrane pass occupies residues 265–282 (ARIVFKTNVLVGYTVFRV). Residue Asn-283 is glycosylated (N-linked (GlcNAc...) asparagine). At 283 to 292 (NMSDEVPRSA) the chain is on the extracellular side. The chain crosses the membrane as a helical span at residues 293-313 (GCTPLIGVFFTVCMALLVLSL). Over 314-410 (SKSILLIKFL…WLAILYRFDQ (97 aa)) the chain is Cytoplasmic. The HA-stretch; determines single-channel conductance in 5-HT3 receptors stretch occupies residues 377 to 409 (FWFQFRSINNSLRTRDQIHQKEVEWLAILYRFD). Residues 411-431 (LLFRIYLAVLGLYTVTLCSLW) traverse the membrane as a helical segment. Topologically, residues 432–437 (ALWSRM) are extracellular.

It belongs to the ligand-gated ion channel (TC 1.A.9) family. 5-hydroxytryptamine receptor (TC 1.A.9.2) subfamily. HTR3B sub-subfamily. Forms homopentameric as well as heteropentameric serotonin-activated cation-selective channel complexes with HTR3A. The homomeric complex is not functional. Heteropentameric complexes display properties which resemble that of neuronal serotonin-activated channels in vivo. In terms of processing, N-glycosylation is required for membrane localization.

It is found in the postsynaptic cell membrane. The protein localises to the cell membrane. It carries out the reaction Na(+)(in) = Na(+)(out). The catalysed reaction is K(+)(in) = K(+)(out). The enzyme catalyses Ca(2+)(in) = Ca(2+)(out). Forms serotonin (5-hydroxytryptamine/5-HT3)-activated cation-selective channel complexes, which when activated cause fast, depolarizing responses in neurons. This chain is 5-hydroxytryptamine receptor 3B, found in Mus musculus (Mouse).